Reading from the N-terminus, the 365-residue chain is Putrescine carbamoyltransferase (365 aa).

Residues 54-58 (STRTR), arginine 105, and histidine 132 contribute to the carbamoyl phosphate site. 277 to 280 (HCLP) is a putrescine binding site.

It belongs to the aspartate/ornithine carbamoyltransferase superfamily. PTCase family. Homotrimer.

The protein localises to the cytoplasm. The enzyme catalyses carbamoyl phosphate + putrescine = N-carbamoylputrescine + phosphate + H(+). Its pathway is amine and polyamine biosynthesis; putrescine biosynthesis via agmatine pathway; putrescine from N-carbamoylputrescine (transferase route): step 1/1. Catalyzes the phosphorolysis of N-carbamoylputrescine to form carbamoyl phosphate and putrescine. Is involved in the degradation pathway of the polyamine agmatine. The sequence is that of Putrescine carbamoyltransferase from Mycoplasma mycoides subsp. mycoides SC (strain CCUG 32753 / NCTC 10114 / PG1).